The sequence spans 467 residues: Cysteine--tRNA ligase (467 aa).

Position 28 (Cys-28) interacts with Zn(2+). A 'HIGH' region motif is present at residues 30-40; that stretch reads PTVYNYIHVGN. Residues Cys-212, His-237, and Glu-241 each coordinate Zn(2+). A 'KMSKS' region motif is present at residues 269-273; it reads KMSKS. Lys-272 serves as a coordination point for ATP.

Belongs to the class-I aminoacyl-tRNA synthetase family. Monomer. Requires Zn(2+) as cofactor.

The protein localises to the cytoplasm. It carries out the reaction tRNA(Cys) + L-cysteine + ATP = L-cysteinyl-tRNA(Cys) + AMP + diphosphate. The sequence is that of Cysteine--tRNA ligase from Oenococcus oeni (strain ATCC BAA-331 / PSU-1).